We begin with the raw amino-acid sequence, 180 residues long: Hypoxanthine-guanine phosphoribosyltransferase (180 aa).

Diphosphate-binding residues include Lys43 and Gly44. 2 residues coordinate Mg(2+): Glu99 and Asp100. Asp103 functions as the Proton acceptor in the catalytic mechanism. GMP contacts are provided by residues Lys131, 152–153, and Asp159; that span reads FI. Arg165 serves as a coordination point for diphosphate.

This sequence belongs to the purine/pyrimidine phosphoribosyltransferase family. Mg(2+) serves as cofactor.

The protein localises to the cytoplasm. The catalysed reaction is IMP + diphosphate = hypoxanthine + 5-phospho-alpha-D-ribose 1-diphosphate. The enzyme catalyses GMP + diphosphate = guanine + 5-phospho-alpha-D-ribose 1-diphosphate. It participates in purine metabolism; IMP biosynthesis via salvage pathway; IMP from hypoxanthine: step 1/1. Its pathway is purine metabolism; GMP biosynthesis via salvage pathway; GMP from guanine: step 1/1. Functionally, purine salvage pathway enzyme that catalyzes the transfer of the ribosyl-5-phosphate group from 5-phospho-alpha-D-ribose 1-diphosphate (PRPP) to the N9 position of the 6-oxopurines hypoxanthine and guanine to form the corresponding ribonucleotides IMP (inosine 5'-monophosphate) and GMP (guanosine 5'-monophosphate), with the release of PPi. This chain is Hypoxanthine-guanine phosphoribosyltransferase (hpt), found in Streptococcus agalactiae serotype III (strain NEM316).